Consider the following 140-residue polypeptide: Sec-independent protein translocase protein TatB (140 aa).

A helical membrane pass occupies residues 1–21; the sequence is MFDIGFSELLLIAVVALVVLG. The segment at 119-140 is disordered; it reads VHVTSPPPSTSTHGNNGQEKSQ. Residues 128–140 show a composition bias toward polar residues; the sequence is TSTHGNNGQEKSQ.

Belongs to the TatB family. The Tat system comprises two distinct complexes: a TatABC complex, containing multiple copies of TatA, TatB and TatC subunits, and a separate TatA complex, containing only TatA subunits. Substrates initially bind to the TatABC complex, which probably triggers association of the separate TatA complex to form the active translocon.

The protein resides in the cell inner membrane. Part of the twin-arginine translocation (Tat) system that transports large folded proteins containing a characteristic twin-arginine motif in their signal peptide across membranes. Together with TatC, TatB is part of a receptor directly interacting with Tat signal peptides. TatB may form an oligomeric binding site that transiently accommodates folded Tat precursor proteins before their translocation. The polypeptide is Sec-independent protein translocase protein TatB (Xylella fastidiosa (strain 9a5c)).